The chain runs to 265 residues: uncharacterized protein (265 aa).

Positions 143–205 (ATQKALKDSI…EKLIKSVEKA (63 aa)) form a coiled coil.

This is an uncharacterized protein from Aquifex aeolicus (strain VF5).